The sequence spans 322 residues: Protein-L-isoaspartate O-methyltransferase (322 aa).

The interval 1-101 (MSGERAKRFP…AKQGDRSAAP (101 aa)) is disordered. A compositionally biased stretch (basic and acidic residues) spans 14-29 (EDLKREPRKPEGRVAE). 2 stretches are compositionally biased toward low complexity: residues 33–51 (AGDAARQRLTAAAAAPAAA) and 76–91 (HAPAAPGAAKRAPQGG). Residue serine 170 is part of the active site.

This sequence belongs to the methyltransferase superfamily. L-isoaspartyl/D-aspartyl protein methyltransferase family.

It is found in the cytoplasm. The catalysed reaction is [protein]-L-isoaspartate + S-adenosyl-L-methionine = [protein]-L-isoaspartate alpha-methyl ester + S-adenosyl-L-homocysteine. Functionally, catalyzes the methyl esterification of L-isoaspartyl residues in peptides and proteins that result from spontaneous decomposition of normal L-aspartyl and L-asparaginyl residues. It plays a role in the repair and/or degradation of damaged proteins. The protein is Protein-L-isoaspartate O-methyltransferase of Burkholderia pseudomallei (strain 1710b).